A 507-amino-acid chain; its full sequence is Histidine ammonia-lyase (507 aa).

Residues 140–142 constitute a cross-link (5-imidazolinone (Ala-Gly)); the sequence is ASG. Ser141 bears the 2,3-didehydroalanine (Ser) mark.

Belongs to the PAL/histidase family. In terms of processing, contains an active site 4-methylidene-imidazol-5-one (MIO), which is formed autocatalytically by cyclization and dehydration of residues Ala-Ser-Gly.

It localises to the cytoplasm. It carries out the reaction L-histidine = trans-urocanate + NH4(+). It functions in the pathway amino-acid degradation; L-histidine degradation into L-glutamate; N-formimidoyl-L-glutamate from L-histidine: step 1/3. The chain is Histidine ammonia-lyase from Yersinia enterocolitica serotype O:8 / biotype 1B (strain NCTC 13174 / 8081).